A 443-amino-acid chain; its full sequence is Exodeoxyribonuclease 7 large subunit (443 aa).

Belongs to the XseA family. As to quaternary structure, heterooligomer composed of large and small subunits.

It localises to the cytoplasm. It carries out the reaction Exonucleolytic cleavage in either 5'- to 3'- or 3'- to 5'-direction to yield nucleoside 5'-phosphates.. Bidirectionally degrades single-stranded DNA into large acid-insoluble oligonucleotides, which are then degraded further into small acid-soluble oligonucleotides. This chain is Exodeoxyribonuclease 7 large subunit, found in Vibrio parahaemolyticus serotype O3:K6 (strain RIMD 2210633).